The chain runs to 1043 residues: Peroxisomal ATPase PEX1 (1043 aa).

An AAA-cassette D1 region spans residues 453–626 (ATPAIILDGK…SKNQIMKLNR (174 aa)). ATP-binding positions include 461-468 (GKQGIGKT) and 738-745 (GYPGCGKT). The tract at residues 733-926 (GILLYGYPGC…CYNAYLKSVH (194 aa)) is AAA-cassette D2.

This sequence belongs to the AAA ATPase family. In terms of assembly, interacts with PEX6; forming the PEX1-PEX6 AAA ATPase complex, which is composed of a heterohexamer formed by a trimer of PEX1-PEX6 dimers. The PEX1-PEX6 heterooligomers associate with the peroxisomal importomer via interaction of PEX6 with the peroxisomal membrane anchor PEX15.

The protein resides in the cytoplasm. It is found in the cytosol. The protein localises to the peroxisome membrane. It carries out the reaction ATP + H2O = ADP + phosphate + H(+). Component of the PEX1-PEX6 AAA ATPase complex, a protein dislocase complex that mediates the ATP-dependent extraction of the PEX5 receptor from peroxisomal membranes, an essential step for PEX5 recycling. Specifically recognizes PEX5 monoubiquitinated at 'Cys-6', and pulls it out of the peroxisome lumen through the PEX2-PEX10-PEX12 retrotranslocation channel. Extraction by the PEX1-PEX6 AAA ATPase complex is accompanied by unfolding of the TPR repeats and release of bound cargo from PEX5. The polypeptide is Peroxisomal ATPase PEX1 (Saccharomyces cerevisiae (strain ATCC 204508 / S288c) (Baker's yeast)).